A 240-amino-acid chain; its full sequence is Serine protease SplB (240 aa).

An N-terminal signal peptide occupies residues 1–36 (MNKNVVIKSLATLTILTSVAGIGTTLVEEVQQTAKA). Residues His75, Asp113, and Ser193 each act as charge relay system in the active site.

The protein belongs to the peptidase S1B family.

The protein localises to the secreted. Its function is as follows. Serine protease that cleaves specifically after the sequence Trp-Glu-Leu-Gln. The chain is Serine protease SplB (splB) from Staphylococcus aureus (strain bovine RF122 / ET3-1).